The sequence spans 546 residues: Chaperonin GroEL 2 (546 aa).

ATP is bound by residues 30–33 (TLGP), lysine 51, 87–91 (DGTTT), glycine 415, 479–481 (NAA), and aspartate 495.

Belongs to the chaperonin (HSP60) family. Forms a cylinder of 14 subunits composed of two heptameric rings stacked back-to-back. Interacts with the co-chaperonin GroES.

The protein resides in the cytoplasm. The enzyme catalyses ATP + H2O + a folded polypeptide = ADP + phosphate + an unfolded polypeptide.. In terms of biological role, together with its co-chaperonin GroES, plays an essential role in assisting protein folding. The GroEL-GroES system forms a nano-cage that allows encapsulation of the non-native substrate proteins and provides a physical environment optimized to promote and accelerate protein folding. This chain is Chaperonin GroEL 2, found in Chromobacterium violaceum (strain ATCC 12472 / DSM 30191 / JCM 1249 / CCUG 213 / NBRC 12614 / NCIMB 9131 / NCTC 9757 / MK).